The primary structure comprises 265 residues: Capsule polysaccharide export inner-membrane protein BexB (265 aa).

Transmembrane regions (helical) follow at residues 37–57 (IGFFWLFVEPLLMTFFIVMMW), 64–84 (KFSTLNMIAFVMTGYPMAMMW), 118–138 (LLEVAGASIAQILFMAILVMI), 151–171 (LIAWFLMAMFAFGLGLIICAI), 178–198 (FGKIWGTLSFVLLPISGAFFF), and 235–255 (ESIGFLVVSDLALLLLGLVMV). One can recognise an ABC transmembrane type-2 domain in the interval 37 to 258 (IGFFWLFVEP…LLGLVMVKNF (222 aa)).

Belongs to the ABC-2 integral membrane protein family.

The protein resides in the cell inner membrane. May form an ATP-driven capsule polysaccharide export apparatus, in association with the BexA, BexC and BexD proteins. This Haemophilus influenzae protein is Capsule polysaccharide export inner-membrane protein BexB (bexB).